A 465-amino-acid chain; its full sequence is UDP-N-acetylmuramate--L-alanine ligase (465 aa).

Residue 112 to 118 participates in ATP binding; that stretch reads GTHGKTT.

Belongs to the MurCDEF family.

The protein localises to the cytoplasm. It carries out the reaction UDP-N-acetyl-alpha-D-muramate + L-alanine + ATP = UDP-N-acetyl-alpha-D-muramoyl-L-alanine + ADP + phosphate + H(+). The protein operates within cell wall biogenesis; peptidoglycan biosynthesis. Cell wall formation. The chain is UDP-N-acetylmuramate--L-alanine ligase from Burkholderia orbicola (strain MC0-3).